We begin with the raw amino-acid sequence, 120 residues long: MARSMKLACVALVICMVVIAPMAEAALSCGTVSADMAPCVTYLQAPNNASPPPPCCAGVKKLLAAATTTPDRQAACNCLKSAAGSIPKLNTNNAAALPGKCGVSIPYKISTSTNCNTVRF.

The signal sequence occupies residues 1–25 (MARSMKLACVALVICMVVIAPMAEA). Cystine bridges form between C29-C78, C39-C55, C56-C101, and C76-C115. A propeptide is located at residue F120.

The protein belongs to the plant LTP family. Expressed in roots, stem, leaves and tendrils of the mature plant.

In terms of biological role, plant non-specific lipid-transfer proteins transfer phospholipids as well as galactolipids across membranes. May play a role in wax or cutin deposition in the cell walls of expanding epidermal cells and certain secretory tissues. Binds saturated and unsaturated lipids, jasmonic acid and lysolipids. Has antifungal activity against A.niger VKM F-2259 (IC(50)=40 uM), F.oxysporum TCXA-4 (IC(50)=20-40), F.solani VKM F-142 (IC(50)=20-40 uM) and N.crassa VKM F-184 (IC(50)=40 uM). Has weak antibacterial activity against A.tumefaciens A281, C.michiganensis VKM Ac-1144 and P.syringae VKM B-1546. This is Non-specific lipid-transfer protein 1 from Pisum sativum (Garden pea).